The sequence spans 1004 residues: Glutamate [NMDA] receptor subunit 1 (1004 aa).

Residues 1 to 39 (MAGTDSPAAARFVYRCLLFAPAIVVGLLLPLTLPPIAAA) form the signal peptide. The Extracellular portion of the chain corresponds to 40–585 (QRHTASDNPS…TLVSFLQPFS (546 aa)). Residues asparagine 270, asparagine 326, asparagine 357, asparagine 409, asparagine 466, asparagine 493, and asparagine 513 are each glycosylated (N-linked (GlcNAc...) asparagine). Glycine is bound by residues 542-544 (PLT) and arginine 549. A helical membrane pass occupies residues 586 to 606 (NTLWILVMVSVHVVALVLYLL). Residues 607 to 663 (DRFSPFGRFKLSHSDSNEEKALNLSSAVWFAWGVLLNSGIGEGTPRSFSARVLGMVW) are Cytoplasmic-facing. A helical transmembrane segment spans residues 664–684 (AGFAMIIVASYTANLAAFLVL). Residues 685–843 (ERPKTKLSGI…KTPNTLGLKN (159 aa)) lie on the Extracellular side of the membrane. Asparagine 705 is a glycosylation site (N-linked (GlcNAc...) asparagine). The glycine site is built by serine 715 and aspartate 759. Residues 844-864 (MAGVFILVGVGIAGGVGLIII) traverse the membrane as a helical segment. Over 865–1004 (EVIYKKHQVK…YTSDVSHLVV (140 aa)) the chain is Cytoplasmic. Residues 980–1004 (TRPQQNILPPRYSPGYTSDVSHLVV) form a disordered region. Over residues 994–1004 (GYTSDVSHLVV) the composition is skewed to polar residues.

The protein belongs to the glutamate-gated ion channel (TC 1.A.10.1) family. In terms of assembly, forms a heteromeric NMDA channel with Nmdar2.

The protein localises to the cell membrane. The protein resides in the postsynaptic cell membrane. It localises to the postsynaptic density. In terms of biological role, NMDA receptor subtype of glutamate-gated ion channels with high calcium permeability and voltage-dependent sensitivity to magnesium. Mediated by glycine. This protein plays a key role in synaptic plasticity, synaptogenesis, excitotoxicity, memory acquisition and learning. It mediates neuronal functions in glutamate neurotransmission. Is involved in the cell surface targeting of NMDA receptors. Plays a role in associative learning and in long-term memory consolidation. This chain is Glutamate [NMDA] receptor subunit 1, found in Drosophila pseudoobscura pseudoobscura (Fruit fly).